Here is a 394-residue protein sequence, read N- to C-terminus: MTKPIRNVAVLGATGSIGAAALDVLARHPRQFHVSLLAAGQRVDALLALCHTYRPDHAVIGDATLYTTLRDGLNAAGLATKAYAGEAALAELVASTTCDTVVAAIVGAAGLHSTLAAARAGKRLLLANKESLVLAGMLLMREASISGAEIIPIDSEHNAIFQCLRSRTTNGVHRVTLTASGGPFRGHNRTMLAKITPTQAMAHPTWSMGPKISVDSATLMNKGLEVIEAHHLFGLPSEQIDVLVHPQSLVHSLVEFIDGSTLAQLSLPDMRTTLAVGLAWPERIGSGVPGLDLMKHNRLDFEHPDTETFSCLRLARDAMQTGGTAPAVLNAANEIAVSAFLQGRIGFLTIPALIEHALTTLPRYEADTLETLLTVDTETRRITHAALTHFPLPL.

Residues threonine 14, glycine 15, serine 16, isoleucine 17, glycine 40, and asparagine 128 each coordinate NADPH. Lysine 129 provides a ligand contact to 1-deoxy-D-xylulose 5-phosphate. Glutamate 130 is a binding site for NADPH. Aspartate 154 provides a ligand contact to Mn(2+). 1-deoxy-D-xylulose 5-phosphate contacts are provided by serine 155, glutamate 156, serine 180, and histidine 203. Mn(2+) is bound at residue glutamate 156. Glycine 209 is an NADPH binding site. Residues serine 216, asparagine 221, lysine 222, and glutamate 225 each coordinate 1-deoxy-D-xylulose 5-phosphate. Glutamate 225 is a Mn(2+) binding site.

The protein belongs to the DXR family. The cofactor is Mg(2+). Requires Mn(2+) as cofactor.

It carries out the reaction 2-C-methyl-D-erythritol 4-phosphate + NADP(+) = 1-deoxy-D-xylulose 5-phosphate + NADPH + H(+). It participates in isoprenoid biosynthesis; isopentenyl diphosphate biosynthesis via DXP pathway; isopentenyl diphosphate from 1-deoxy-D-xylulose 5-phosphate: step 1/6. Its function is as follows. Catalyzes the NADPH-dependent rearrangement and reduction of 1-deoxy-D-xylulose-5-phosphate (DXP) to 2-C-methyl-D-erythritol 4-phosphate (MEP). This is 1-deoxy-D-xylulose 5-phosphate reductoisomerase from Xylella fastidiosa (strain M12).